Consider the following 108-residue polypeptide: DNA-binding protein HBbu (108 aa).

Belongs to the bacterial histone-like protein family.

In terms of biological role, histone-like DNA-binding protein which is capable of wrapping DNA to stabilize it, and thus to prevent its denaturation under extreme environmental conditions. This chain is DNA-binding protein HBbu (hbb), found in Borreliella afzelii (Borrelia afzelii).